The sequence spans 587 residues: Protein IQ-DOMAIN 31 (587 aa).

Residues 57-80 (ETNTVDRSGGMLETQNVGPEEISD) are disordered. Serine 79 carries the post-translational modification Phosphoserine. 3 IQ domains span residues 112-140 (REIA…GIIR), 141-163 (LQAL…SVMG), and 164-188 (IVRL…VYRK). The calmodulin-binding stretch occupies residues 149 to 159 (LVRRQAVATLF). The short motif at 176–183 (IRKSDIGV) is the Nuclear localization signal element. The interval 344 to 587 (NPVVESSIQP…AKTTPAERKR (244 aa)) is disordered. 2 stretches are compositionally biased toward basic and acidic residues: residues 357 to 373 (PRKE…KTRE) and 390 to 413 (CDEK…EMEV). Over residues 424-434 (ALDSSLVNQID) the composition is skewed to polar residues. 2 stretches are compositionally biased toward basic and acidic residues: residues 435–472 (SNEK…ENQK) and 482–494 (KTER…HHET). Polar residues-rich tracts occupy residues 495–506 (SPSIPSYMQATK) and 544–561 (RITS…SGDK).

Belongs to the IQD family. Binds to multiple calmodulin (CaM) in the presence of Ca(2+) and CaM-like proteins.

It localises to the nucleus. It is found in the nucleus envelope. The protein localises to the cytoplasm. The protein resides in the cytoskeleton. Its subcellular location is the cell membrane. Its function is as follows. May be involved in cooperative interactions with calmodulins or calmodulin-like proteins. Recruits calmodulin proteins to microtubules, thus being a potential scaffold in cellular signaling and trafficking. May associate with nucleic acids and regulate gene expression at the transcriptional or post-transcriptional level. This is Protein IQ-DOMAIN 31 from Arabidopsis thaliana (Mouse-ear cress).